A 324-amino-acid polypeptide reads, in one-letter code: Hydroxylase/desaturase CTB9 (324 aa).

A compositionally biased stretch (polar residues) spans 1 to 11 (MTSTITTTETL). Disordered regions lie at residues 1-33 (MTSTITTTETLQDAVPFVAPPSPPEDTSNKELP) and 288-308 (TARRVPHSSFPTPDDFGEPRA).

This sequence belongs to the asaB hydroxylase/desaturase family.

The protein operates within mycotoxin biosynthesis. In terms of biological role, hydroxylase/desaturase; part of the gene cluster that mediates the biosynthesis of cercosporin, a light-activated, non-host-selective toxin. The perylenequinone chromophore of cercosporin absorbs light energy to attain an electronically-activated triplet state and produces active oxygen species such as the hydroxyl radical, superoxide, hydrogen peroxide or singlet oxygen upon reaction with oxygen molecules. These reactive oxygen species cause damage to various cellular components including lipids, proteins and nucleic acids. The first step of cercosporin biosynthesis is performed by the polyketide synthase CTB1 which catalyzes the formation of nor-toralactone. The starter unit acyltransferase (SAT) domain of CTB1 initiates polyketide extension by the selective utilization of acetyl-CoA, which is elongated to the heptaketide in the beta-ketoacyl synthase (KS) domain by successive condensations with six malonyl units introduced by the malonyl acyltransferase (MAT) domain. The product template (PT) domain catalyzes C4-C9 and C2-C11 aldol cyclizations and dehydrations to a trihydroxynaphthalene, which is thought to be delivered to the thioesterase (TE) domain for product release. The bifunctional enzyme CTB3 then methylates nor-toralactone to toralactone before conducting an unusual oxidative aromatic ring opening. The O-methyltransferase CTB2 further methylates the nascent OH-6 of the CBT3 product, blocking further oxidation at this site before the reductase CTB6 reduces the 2-oxopropyl ketone at position C7, giving naphthalene. The FAD-dependent monooxygenase CTB5 in concert with the multicopper oxidase CTB12 are responsible for homodimerization of naphthalene with CTB7 installing the dioxepine moiety, finally producing cercosporin. The fasciclin domain-containing protein CTB11 might act with CTB5 and CTB12 whereas the roles of CTB9 and CTB10 have still to be elucidated. The chain is Hydroxylase/desaturase CTB9 from Cercospora beticola (Sugarbeet leaf spot fungus).